The following is a 477-amino-acid chain: Ankyrin repeat, SAM and basic leucine zipper domain-containing protein 1 (477 aa).

Positions 1–24 (MATSALRGLAVAGGGESSESEDDG) are disordered. A phosphoserine mark is found at Ser-17, Ser-18, and Ser-20. ANK repeat units follow at residues 46–76 (EKKE…SVDA), 80–109 (YGWT…NASF), 112–146 (DKQT…DPNV), 150–179 (RLMT…EVNT), 183–212 (NGYT…NKML), and 216–245 (DGKL…PLEG). The SAM domain maps to 274-336 (SYAEFGDLEV…KILAALKELE (63 aa)).

In terms of assembly, interacts with DDX4, PIWIL1, RANBP9 and TDRD1.

The protein resides in the cytoplasm. Plays a central role during spermatogenesis by repressing transposable elements and preventing their mobilization, which is essential for the germline integrity. Acts via the piRNA metabolic process, which mediates the repression of transposable elements during meiosis by forming complexes composed of piRNAs and Piwi proteins and governs the methylation and subsequent repression of transposons. Its association with pi-bodies suggests a participation in the primary piRNAs metabolic process. Required prior to the pachytene stage to facilitate the production of multiple types of piRNAs, including those associated with repeats involved in the regulation of retrotransposons. May act by mediating protein-protein interactions during germ cell maturation. This Saimiri boliviensis boliviensis (Bolivian squirrel monkey) protein is Ankyrin repeat, SAM and basic leucine zipper domain-containing protein 1 (ASZ1).